Consider the following 248-residue polypeptide: MYKLVLIRHGESTWNLENRFTGWVDVDLTDTGAAQARLAGKLLKEAGFAFDVAYTSVLKRAIRTLWHVQDEMDEMWIPVRNEWRLNERHYGALAGLNKAETAAKFGDEQVLVWRRSYDTPPPALEPTDPRASYDDPRYANVPREQIPLTECLKDTVARVLPLWNESIAPDIQSGKRVVIAAHGNSIRALVKYLDQISDDDIVGLNIPNGTPLVYELDASLRPLRHYYLGDQEAIAASLAAVASQGKAR.

Residues 8 to 15, 21 to 22, R60, 87 to 90, K98, 114 to 115, and 183 to 184 contribute to the substrate site; these read RHGESTWN, TG, ERHY, RR, and GN. The active-site Tele-phosphohistidine intermediate is the H9. E87 (proton donor/acceptor) is an active-site residue.

It belongs to the phosphoglycerate mutase family. BPG-dependent PGAM subfamily. Homodimer.

It catalyses the reaction (2R)-2-phosphoglycerate = (2R)-3-phosphoglycerate. The protein operates within carbohydrate degradation; glycolysis; pyruvate from D-glyceraldehyde 3-phosphate: step 3/5. Catalyzes the interconversion of 2-phosphoglycerate and 3-phosphoglycerate. This is 2,3-bisphosphoglycerate-dependent phosphoglycerate mutase from Cupriavidus pinatubonensis (strain JMP 134 / LMG 1197) (Cupriavidus necator (strain JMP 134)).